We begin with the raw amino-acid sequence, 241 residues long: Ribonuclease PH (241 aa).

Phosphate contacts are provided by residues Arg-89 and Gly-127–Arg-129.

The protein belongs to the RNase PH family. In terms of assembly, homohexameric ring arranged as a trimer of dimers.

The catalysed reaction is tRNA(n+1) + phosphate = tRNA(n) + a ribonucleoside 5'-diphosphate. Functionally, phosphorolytic 3'-5' exoribonuclease that plays an important role in tRNA 3'-end maturation. Removes nucleotide residues following the 3'-CCA terminus of tRNAs; can also add nucleotides to the ends of RNA molecules by using nucleoside diphosphates as substrates, but this may not be physiologically important. Probably plays a role in initiation of 16S rRNA degradation (leading to ribosome degradation) during starvation. The protein is Ribonuclease PH of Stenotrophomonas maltophilia (strain K279a).